The chain runs to 608 residues: Elongation factor 4 (608 aa).

One can recognise a tr-type G domain in the interval 11–193; the sequence is KKIRNFSIIA…QIVEKVPEPS (183 aa). GTP contacts are provided by residues 23–28 and 140–143; these read DHGKST and NKID.

It belongs to the TRAFAC class translation factor GTPase superfamily. Classic translation factor GTPase family. LepA subfamily.

It localises to the cell membrane. It catalyses the reaction GTP + H2O = GDP + phosphate + H(+). In terms of biological role, required for accurate and efficient protein synthesis under certain stress conditions. May act as a fidelity factor of the translation reaction, by catalyzing a one-codon backward translocation of tRNAs on improperly translocated ribosomes. Back-translocation proceeds from a post-translocation (POST) complex to a pre-translocation (PRE) complex, thus giving elongation factor G a second chance to translocate the tRNAs correctly. Binds to ribosomes in a GTP-dependent manner. The polypeptide is Elongation factor 4 (Listeria innocua serovar 6a (strain ATCC BAA-680 / CLIP 11262)).